The primary structure comprises 380 residues: Cytochrome b (380 aa).

4 helical membrane-spanning segments follow: residues 34–54 (FGSL…LLAM), 78–99 (WLIR…YMHI), 114–134 (WNTG…GYVL), and 179–199 (FFAL…IHLT). Residues His-84 and His-98 each contribute to the heme b site. Residues His-183 and His-197 each contribute to the heme b site. His-202 is an a ubiquinone binding site. A run of 4 helical transmembrane segments spans residues 227-247 (LKDI…ALFS), 289-309 (LGGV…PLLH), 321-341 (LSQL…WIGS), and 348-368 (FIII…ILFP).

Belongs to the cytochrome b family. The cytochrome bc1 complex contains 11 subunits: 3 respiratory subunits (MT-CYB, CYC1 and UQCRFS1), 2 core proteins (UQCRC1 and UQCRC2) and 6 low-molecular weight proteins (UQCRH/QCR6, UQCRB/QCR7, UQCRQ/QCR8, UQCR10/QCR9, UQCR11/QCR10 and a cleavage product of UQCRFS1). This cytochrome bc1 complex then forms a dimer. Heme b serves as cofactor.

The protein resides in the mitochondrion inner membrane. Its function is as follows. Component of the ubiquinol-cytochrome c reductase complex (complex III or cytochrome b-c1 complex) that is part of the mitochondrial respiratory chain. The b-c1 complex mediates electron transfer from ubiquinol to cytochrome c. Contributes to the generation of a proton gradient across the mitochondrial membrane that is then used for ATP synthesis. The protein is Cytochrome b (MT-CYB) of Hydrobates pelagicus (European storm-petrel).